The sequence spans 300 residues: 4-hydroxy-tetrahydrodipicolinate synthase (300 aa).

Thr-55 is a binding site for pyruvate. The Proton donor/acceptor role is filled by Tyr-143. Lys-171 functions as the Schiff-base intermediate with substrate in the catalytic mechanism. Pyruvate is bound at residue Ile-211.

Belongs to the DapA family. As to quaternary structure, homotetramer; dimer of dimers.

Its subcellular location is the cytoplasm. It carries out the reaction L-aspartate 4-semialdehyde + pyruvate = (2S,4S)-4-hydroxy-2,3,4,5-tetrahydrodipicolinate + H2O + H(+). Its pathway is amino-acid biosynthesis; L-lysine biosynthesis via DAP pathway; (S)-tetrahydrodipicolinate from L-aspartate: step 3/4. Functionally, catalyzes the condensation of (S)-aspartate-beta-semialdehyde [(S)-ASA] and pyruvate to 4-hydroxy-tetrahydrodipicolinate (HTPA). This chain is 4-hydroxy-tetrahydrodipicolinate synthase, found in Mycobacterium bovis (strain ATCC BAA-935 / AF2122/97).